A 584-amino-acid chain; its full sequence is POTE ankyrin domain family member D (584 aa).

6 ANK repeats span residues glutamate 172–valine 201, lysine 205–isoleucine 234, tyrosine 238–serine 267, cysteine 271–valine 300, tyrosine 304–serine 333, and serine 337–leucine 366. The tract at residues serine 369–glutamate 502 is disordered. Basic and acidic residues-rich tracts occupy residues glutamine 377–valine 392, methionine 401–aspartate 412, and glutamate 466–serine 481. The span at glutamate 482–glutamine 498 shows a compositional bias: polar residues. Positions leucine 494 to asparagine 583 form a coiled coil.

It belongs to the POTE family. Expressed in prostate, ovary, testis, placenta and prostate cancer cell lines. Localizes to basal and terminal prostate epithelial cells.

It is found in the cell membrane. The polypeptide is POTE ankyrin domain family member D (POTED) (Homo sapiens (Human)).